Reading from the N-terminus, the 29-residue chain is Galanin (29 aa).

The residue at position 29 (Ala-29) is an Alanine amide.

The protein belongs to the galanin family.

The protein localises to the secreted. In terms of biological role, contracts smooth muscle of the gastrointestinal and genitourinary tract, regulates growth hormone release, modulates insulin release, and may be involved in the control of adrenal secretion. This is Galanin (gal) from Amia calva (Bowfin).